The chain runs to 132 residues: Small ribosomal subunit protein uS8 (132 aa).

It belongs to the universal ribosomal protein uS8 family. Part of the 30S ribosomal subunit. Contacts proteins S5 and S12.

Its function is as follows. One of the primary rRNA binding proteins, it binds directly to 16S rRNA central domain where it helps coordinate assembly of the platform of the 30S subunit. In Streptococcus pyogenes serotype M49 (strain NZ131), this protein is Small ribosomal subunit protein uS8.